Here is a 396-residue protein sequence, read N- to C-terminus: MTKSEKIIELTNHYGAHNYLPLPIVISEAEGVWVKDPEGNKYMDMLSAYSAVNQGHRHPKIIQALKDQADKVTLVSRAFHSDNLGEWYEKICKLAGKDKALPMNTGAEAVETALKAARRWAYDVKGIEPNKAEIIAFNGNFHGRTMAPVSLSSEAEYQRGYGPLLDGFRKVDFGDVDALKAAINENTAAVLVEPIQGEAGINIPPEGYLKAIRELCDEHNVLFIADEIQAGLGRSGKLFATDWDNVKPDVYILGKALGGGVFPISVVLADKEVLDVFTPGSHGSTFGGNPLACAASIAALDVIVDEDLPGRSLELGDYFKEQLKQIDHPSIKEVRGRGLFIGVELNESARPYCEALKEEGLLCKETHDTVIRFAPPLIITKEELDLALEKIRHVFQ.

Lys255 is subject to N6-(pyridoxal phosphate)lysine.

It belongs to the class-III pyridoxal-phosphate-dependent aminotransferase family. OAT subfamily. Pyridoxal 5'-phosphate is required as a cofactor.

It is found in the cytoplasm. It carries out the reaction a 2-oxocarboxylate + L-ornithine = L-glutamate 5-semialdehyde + an L-alpha-amino acid. Its pathway is amino-acid biosynthesis; L-proline biosynthesis; L-glutamate 5-semialdehyde from L-ornithine: step 1/1. In terms of biological role, catalyzes the interconversion of ornithine to glutamate semialdehyde. The protein is Ornithine aminotransferase 2 of Staphylococcus aureus (strain COL).